Consider the following 427-residue polypeptide: Serine hydroxymethyltransferase (427 aa).

Residues L118 and G122–L124 each bind (6S)-5,6,7,8-tetrahydrofolate. K227 carries the N6-(pyridoxal phosphate)lysine modification. A (6S)-5,6,7,8-tetrahydrofolate-binding site is contributed by S351–F353.

This sequence belongs to the SHMT family. Homodimer. The cofactor is pyridoxal 5'-phosphate.

It is found in the cytoplasm. The enzyme catalyses (6R)-5,10-methylene-5,6,7,8-tetrahydrofolate + glycine + H2O = (6S)-5,6,7,8-tetrahydrofolate + L-serine. It functions in the pathway one-carbon metabolism; tetrahydrofolate interconversion. Its pathway is amino-acid biosynthesis; glycine biosynthesis; glycine from L-serine: step 1/1. In terms of biological role, catalyzes the reversible interconversion of serine and glycine with tetrahydrofolate (THF) serving as the one-carbon carrier. This reaction serves as the major source of one-carbon groups required for the biosynthesis of purines, thymidylate, methionine, and other important biomolecules. Also exhibits THF-independent aldolase activity toward beta-hydroxyamino acids, producing glycine and aldehydes, via a retro-aldol mechanism. This Thermotoga petrophila (strain ATCC BAA-488 / DSM 13995 / JCM 10881 / RKU-1) protein is Serine hydroxymethyltransferase.